The primary structure comprises 183 residues: MLTMDDIVREGHPALREVASEVTFPLSDEEKKLGHDMLEFLINSQDEELAEKYGLRGGVGIAAPQLAVTKRILAIHVHDEKDRLYSYVLYNPKIRSHSVQQACLSGGEGCLSVDREVPGYVVRSERVTIDAFDENGIPLKLRFKDYPAIVVQHEIDHLNGIMFYDHINKENPSYLPPDVDVFG.

Fe cation contacts are provided by cysteine 110 and histidine 153. Glutamate 154 is an active-site residue. A Fe cation-binding site is contributed by histidine 157.

This sequence belongs to the polypeptide deformylase family. Fe(2+) serves as cofactor.

It carries out the reaction N-terminal N-formyl-L-methionyl-[peptide] + H2O = N-terminal L-methionyl-[peptide] + formate. Removes the formyl group from the N-terminal Met of newly synthesized proteins. Requires at least a dipeptide for an efficient rate of reaction. N-terminal L-methionine is a prerequisite for activity but the enzyme has broad specificity at other positions. This chain is Peptide deformylase, found in Listeria welshimeri serovar 6b (strain ATCC 35897 / DSM 20650 / CCUG 15529 / CIP 8149 / NCTC 11857 / SLCC 5334 / V8).